A 186-amino-acid polypeptide reads, in one-letter code: dCTP deaminase (186 aa).

107-112 (KSSYAR) serves as a coordination point for dCTP. Glu133 serves as the catalytic Proton donor/acceptor. DCTP-binding residues include Gln152, Tyr166, and Gln176.

This sequence belongs to the dCTP deaminase family. In terms of assembly, homotrimer.

It carries out the reaction dCTP + H2O + H(+) = dUTP + NH4(+). It participates in pyrimidine metabolism; dUMP biosynthesis; dUMP from dCTP (dUTP route): step 1/2. Functionally, catalyzes the deamination of dCTP to dUTP. This chain is dCTP deaminase, found in Chloroflexus aggregans (strain MD-66 / DSM 9485).